The following is a 443-amino-acid chain: MDRLGSFSNDPSDKPPCRGCSSYLMEPYIKCAECGPPPFFLCLQCFTRGFEYKKHQSDHTYEIMTSDFPVLDPSWTAQEEMALLEAVMDCGFGNWQDVANQMCTKTKEECEKHYMKHFINNPLFASTLLNLKQAEAAKTADTAIPFHSADDPPRPAFDSLLSRDMAGYMPARADFIEEFDNYAEWDLRDIDFVEDDSDILHALKMAVVDIYHSRLKERQRRKKIIRDHGLVNLRKFRLMERRYPKEVQDLYETMRRFARIVGPVEHDKFIESHALEFELRREIKRLQEYRTAGITNFCSARTYDHLKKTREEERLKRTMLSEVLQYIQDSSACQQWLRRQADIDSGLSPSVLMASNSGRRSAPPLNLTGLPGTEKLNEKEKELCQVVRLVPGAYLEYKSALLNECHKQGGLRLAQARALIKIDVNKTRKIYDFLIREGYITKA.

Phosphoserine is present on S6. The ZZ-type zinc-finger motif lies at 12-69 (SDKPPCRGCSSYLMEPYIKCAECGPPPFFLCLQCFTRGFEYKKHQSDHTYEIMTSDFP). Zn(2+) is bound by residues C17, C20, C31, C34, C42, C45, H55, and H59. Residues 70–122 (VLDPSWTAQEEMALLEAVMDCGFGNWQDVANQMCTKTKEECEKHYMKHFINNP) form the SANT domain. Residues K132 and K138 each participate in a glycyl lysine isopeptide (Lys-Gly) (interchain with G-Cter in SUMO2) cross-link. The region spanning 356-443 (NSGRRSAPPL…LIREGYITKA (88 aa)) is the SWIRM domain. A DNA-binding region spans residues 426–435 (KTRKIYDFLI).

In terms of assembly, interacts with GCN5 and NR3C1. Associated with the P/CAF protein in the PCAF complex. Component of the PCAF complex, at least composed of TADA2L/ADA2, TADA3L/ADA3, TAF5L/PAF65-beta, TAF6L/PAF65-alpha, TAF10/TAFII30, TAF12/TAFII20, TAF9/TAFII31 and TRRAP. Component of the ADA2A-containing complex (ATAC), composed of KAT14, KAT2A, TADA2L, TADA3L, ZZ3, MBIP, WDR5, YEATS2, CCDC101 and DR1. Interacts with CCDC134.

The protein resides in the nucleus. Its subcellular location is the chromosome. In terms of biological role, component of the ATAC complex, a complex with histone acetyltransferase activity on histones H3 and H4. Required for the function of some acidic activation domains, which activate transcription from a distant site. Binds double-stranded DNA. Binds dinucleosomes, probably at the linker region between neighboring nucleosomes. Plays a role in chromatin remodeling. May promote TP53/p53 'Lys-321' acetylation, leading to reduced TP53 stability and transcriptional activity. May also promote XRCC6 acetylation thus facilitating cell apoptosis in response to DNA damage. In Rattus norvegicus (Rat), this protein is Transcriptional adapter 2-alpha (Tada2a).